Consider the following 333-residue polypeptide: tRNA N6-adenosine threonylcarbamoyltransferase (333 aa).

Fe cation-binding residues include His-111 and His-115. Substrate is bound by residues 134–138 (LVSGG), Asp-167, Gly-180, and Asn-272. Asp-300 provides a ligand contact to Fe cation.

It belongs to the KAE1 / TsaD family. It depends on Fe(2+) as a cofactor.

The protein resides in the cytoplasm. It carries out the reaction L-threonylcarbamoyladenylate + adenosine(37) in tRNA = N(6)-L-threonylcarbamoyladenosine(37) in tRNA + AMP + H(+). Required for the formation of a threonylcarbamoyl group on adenosine at position 37 (t(6)A37) in tRNAs that read codons beginning with adenine. Is involved in the transfer of the threonylcarbamoyl moiety of threonylcarbamoyl-AMP (TC-AMP) to the N6 group of A37, together with TsaE and TsaB. TsaD likely plays a direct catalytic role in this reaction. This chain is tRNA N6-adenosine threonylcarbamoyltransferase, found in Legionella pneumophila (strain Lens).